A 374-amino-acid chain; its full sequence is Proteasomal ubiquitin receptor ADRM1 homolog (374 aa).

The region spanning 13 to 131 is the Pru domain; sequence SSSGHIVEFK…KKVTDALNKP (119 aa). Disordered stretches follow at residues 126–166, 187–223, and 334–374; these read DALN…MNAP, SDTL…NPLS, and ANLT…MDVD. Polar residues-rich tracts occupy residues 141–163 and 209–223; these read SAGS…SSDM and PSTN…NPLS. The 108-residue stretch at 239-346 folds into the DEUBAD domain; it reads SQKKEVAVSL…TKAEGGEDAA (108 aa). The segment covering 354–368 has biased composition (basic and acidic residues); that stretch reads DATREPEPKRNRPDN.

Belongs to the ADRM1 family. Component of the 19S proteasome regulatory particle complex. The 26S proteasome consists of a 20S core particle (CP) and two 19S regulatory subunits (RP). Interacts with deubiquitinase ubh-4.

Its subcellular location is the cytoplasm. It is found in the nucleus. May function as a proteasomal ubiquitin receptor. May promote the deubiquitinating activity associated with the 26S proteasome. This Caenorhabditis elegans protein is Proteasomal ubiquitin receptor ADRM1 homolog.